A 430-amino-acid polypeptide reads, in one-letter code: Asparagine--tRNA ligase (430 aa).

It belongs to the class-II aminoacyl-tRNA synthetase family. As to quaternary structure, homodimer.

The protein localises to the cytoplasm. It carries out the reaction tRNA(Asn) + L-asparagine + ATP = L-asparaginyl-tRNA(Asn) + AMP + diphosphate + H(+). The protein is Asparagine--tRNA ligase of Oceanobacillus iheyensis (strain DSM 14371 / CIP 107618 / JCM 11309 / KCTC 3954 / HTE831).